A 183-amino-acid chain; its full sequence is Ribonuclease M5 (183 aa).

The 85-residue stretch at 6–90 (KEVIVVEGKD…AYISRVSGTK (85 aa)) folds into the Toprim domain. Mg(2+) contacts are provided by E12, D59, and D61.

It belongs to the ribonuclease M5 family. It depends on Mg(2+) as a cofactor.

The protein localises to the cytoplasm. It catalyses the reaction Endonucleolytic cleavage of RNA, removing 21 and 42 nucleotides, respectively, from the 5'- and 3'-termini of a 5S-rRNA precursor.. Required for correct processing of both the 5' and 3' ends of 5S rRNA precursor. Cleaves both sides of a double-stranded region yielding mature 5S rRNA in one step. This Fusobacterium nucleatum subsp. nucleatum (strain ATCC 25586 / DSM 15643 / BCRC 10681 / CIP 101130 / JCM 8532 / KCTC 2640 / LMG 13131 / VPI 4355) protein is Ribonuclease M5.